The following is a 192-amino-acid chain: uncharacterized protein (192 aa).

The N-terminal stretch at 1 to 18 (MNSKFILKYFILAFFLVS) is a signal peptide. Cys19 is lipidated: N-palmitoyl cysteine. The S-diacylglycerol cysteine moiety is linked to residue Cys19.

The protein localises to the cell membrane. This is an uncharacterized protein from Borreliella burgdorferi (strain ATCC 35210 / DSM 4680 / CIP 102532 / B31) (Borrelia burgdorferi).